The sequence spans 50 residues: Large ribosomal subunit protein eL39 (50 aa).

The span at 1–12 (MGKKSKASKKRL) shows a compositional bias: basic residues. Disordered stretches follow at residues 1 to 20 (MGKKSKASKKRLAKLERQNS) and 30 to 50 (TNRDVQRNPKRRNWRRNDTDE).

Belongs to the eukaryotic ribosomal protein eL39 family.

The polypeptide is Large ribosomal subunit protein eL39 (rpl39e) (Halobacterium salinarum (strain ATCC 700922 / JCM 11081 / NRC-1) (Halobacterium halobium)).